Reading from the N-terminus, the 348-residue chain is Dihydroorotase (348 aa).

Zn(2+) is bound by residues His14 and His16. Substrate-binding positions include 16 to 18 (HLR) and Asn42. Positions 100, 137, and 175 each coordinate Zn(2+). An N6-carboxylysine modification is found at Lys100. Position 137 (His137) interacts with substrate. Leu220 is a substrate binding site. Zn(2+) is bound at residue Asp248. Asp248 is an active-site residue. Residues His252 and Ala264 each coordinate substrate.

The protein belongs to the metallo-dependent hydrolases superfamily. DHOase family. Class II DHOase subfamily. As to quaternary structure, homodimer. It depends on Zn(2+) as a cofactor.

The catalysed reaction is (S)-dihydroorotate + H2O = N-carbamoyl-L-aspartate + H(+). Its pathway is pyrimidine metabolism; UMP biosynthesis via de novo pathway; (S)-dihydroorotate from bicarbonate: step 3/3. Its function is as follows. Catalyzes the reversible cyclization of carbamoyl aspartate to dihydroorotate. The protein is Dihydroorotase of Pseudomonas aeruginosa (strain ATCC 15692 / DSM 22644 / CIP 104116 / JCM 14847 / LMG 12228 / 1C / PRS 101 / PAO1).